Here is a 479-residue protein sequence, read N- to C-terminus: Anaerobic nitric oxide reductase flavorubredoxin (479 aa).

Residues 30–210 (LRGSSYNSYL…PFSRLVTPKI (181 aa)) form a zinc metallo-hydrolase region. Fe cation contacts are provided by histidine 79, glutamate 81, aspartate 83, histidine 147, aspartate 166, and histidine 227. The region spanning 254–393 (ITIFYDTMSN…LCREHGREIA (140 aa)) is the Flavodoxin-like domain. Residues 260–264 (TMSNN) and 342–369 (AFGSHGWSGGAVDRLSTRLQDAGFEMSL) each bind FMN. In terms of domain architecture, Rubredoxin-like spans 423–474 (GPRMQCSVCQWIYDPAKGEPMQDVAPGTPWSEVPDNFLCPECSLGKDVFEEL). Residues cysteine 428, cysteine 431, cysteine 461, and cysteine 464 each contribute to the Fe cation site.

It in the N-terminal section; belongs to the zinc metallo-hydrolase group 3 family. As to quaternary structure, homotetramer. It depends on Fe cation as a cofactor. Requires FMN as cofactor.

Its subcellular location is the cytoplasm. Its pathway is nitrogen metabolism; nitric oxide reduction. Functionally, anaerobic nitric oxide reductase; uses NADH to detoxify nitric oxide (NO), protecting several 4Fe-4S NO-sensitive enzymes. Has at least 2 reductase partners, only one of which (NorW, flavorubredoxin reductase) has been identified. NO probably binds to the di-iron center; electrons enter from the NorW at rubredoxin and are transferred sequentially to the FMN center and the di-iron center. Also able to function as an aerobic oxygen reductase. This is Anaerobic nitric oxide reductase flavorubredoxin from Shigella boydii serotype 4 (strain Sb227).